We begin with the raw amino-acid sequence, 146 residues long: MKLHELKAAEGSRKVRNRVGRGTSSGNGKTSGRGQKGQKARSGGGVRLGFEGGQTPLFRRIPKRGFTNINTKEYALVNLDQLNVFDDGTEVTPAILKDAGIVRAEKSGVKVLGNGELTKKLTVKAAKFSKSAEAAIIAKGGSIEVI.

The span at Met-1–Arg-13 shows a compositional bias: basic and acidic residues. The interval Met-1–Glu-51 is disordered. Composition is skewed to gly residues over residues Thr-23–Gln-35 and Ser-42–Glu-51.

It belongs to the universal ribosomal protein uL15 family. Part of the 50S ribosomal subunit.

Its function is as follows. Binds to the 23S rRNA. This is Large ribosomal subunit protein uL15 from Streptococcus pyogenes serotype M1.